A 360-amino-acid polypeptide reads, in one-letter code: Deoxyhypusine hydroxylase (360 aa).

3 HEAT-like PBS-type repeats span residues 56–82 (LKHE…ILQD), 89–115 (VRHE…YRSD), and 213–245 (ERYR…GLQD). Fe cation contacts are provided by H58, E59, H91, and E92. Fe cation contacts are provided by H252, E253, H285, and E286.

It belongs to the deoxyhypusine hydroxylase family. Requires Fe(2+) as cofactor.

The protein localises to the cytoplasm. The protein resides in the nucleus. It carries out the reaction [eIF5A protein]-deoxyhypusine + AH2 + O2 = [eIF5A protein]-hypusine + A + H2O. It functions in the pathway protein modification; eIF5A hypusination. Functionally, catalyzes the hydroxylation of the N(6)-(4-aminobutyl)-L-lysine intermediate to form hypusine, an essential post-translational modification only found in mature eIF-5A factor. This Mycosarcoma maydis (Corn smut fungus) protein is Deoxyhypusine hydroxylase.